The sequence spans 135 residues: Prostate and breast cancer overexpressed gene 1 protein (135 aa).

As to expression, expressed in colon, prostate, small intestine, testis and spleen, with lower expression in thymus, ovary, and peripheral blood leukocytes. Up-regulated expression in prostate, breast, and bladder cancer, but not in lung and colon cancer.

The protein resides in the cytoplasm. The protein localises to the nucleus. The polypeptide is Prostate and breast cancer overexpressed gene 1 protein (PBOV1) (Homo sapiens (Human)).